The chain runs to 696 residues: DNA topoisomerase 6 subunit B (696 aa).

Positions 1 to 36 are disordered; the sequence is MDDDAGDGAASGGTKRKVTAASSSAAAKGKAAGKGK. Positions 20-36 are enriched in low complexity; sequence AASSSAAAKGKAAGKGK. ATP-binding positions include asparagine 88, aspartate 187, 208-209, 217-224, and lysine 543; these read TK and GKFGLGAK.

It belongs to the TOP6B family. In terms of assembly, homodimer. Heterotetramer of two TOP6A and two TOP6B subunits. Interacts with SPO11-2 and TOP6A3. In terms of tissue distribution, highly expressed in flowers before pollination. Expressed in roots and shoots.

It is found in the nucleus. The enzyme catalyses ATP-dependent breakage, passage and rejoining of double-stranded DNA.. Functionally, component of the DNA topoisomerase VI involved in chromatin organization and progression of endoreduplication cycles. Relaxes both positive and negative superturns and exhibits a strong decatenase activity. The B subunit binds ATP. May be involved in cell proliferation and stress tolerance. This Oryza sativa subsp. indica (Rice) protein is DNA topoisomerase 6 subunit B.